The sequence spans 61 residues: UPF0434 protein MS0934 (61 aa).

Belongs to the UPF0434 family.

This chain is UPF0434 protein MS0934, found in Mannheimia succiniciproducens (strain KCTC 0769BP / MBEL55E).